Here is a 56-residue protein sequence, read N- to C-terminus: Large ribosomal subunit protein bL33 (56 aa).

Residues 1–12 (MASKGGRDKIKL) are compositionally biased toward basic and acidic residues. The interval 1–28 (MASKGGRDKIKLESTAGTGHFYTTTKNK) is disordered. Residues 15–25 (TAGTGHFYTTT) are compositionally biased toward polar residues.

The protein belongs to the bacterial ribosomal protein bL33 family.

This Cupriavidus necator (strain ATCC 17699 / DSM 428 / KCTC 22496 / NCIMB 10442 / H16 / Stanier 337) (Ralstonia eutropha) protein is Large ribosomal subunit protein bL33.